Consider the following 169-residue polypeptide: NADH-quinone oxidoreductase subunit I (169 aa).

4Fe-4S ferredoxin-type domains are found at residues 60–90 and 100–129; these read LRRYPNGEERCIACKLCEVICPAQAIVIEAE and TRYDIDMIKCIYCGLCQEACPVDAIVEGPN. Residues Cys70, Cys73, Cys76, Cys80, Cys109, Cys112, Cys115, and Cys119 each coordinate [4Fe-4S] cluster.

This sequence belongs to the complex I 23 kDa subunit family. NDH-1 is composed of 14 different subunits. Subunits NuoA, H, J, K, L, M, N constitute the membrane sector of the complex. [4Fe-4S] cluster serves as cofactor.

It localises to the cell membrane. The catalysed reaction is a quinone + NADH + 5 H(+)(in) = a quinol + NAD(+) + 4 H(+)(out). Its function is as follows. NDH-1 shuttles electrons from NADH, via FMN and iron-sulfur (Fe-S) centers, to quinones in the respiratory chain. The immediate electron acceptor for the enzyme in this species is believed to be ubiquinone. Couples the redox reaction to proton translocation (for every two electrons transferred, four hydrogen ions are translocated across the cytoplasmic membrane), and thus conserves the redox energy in a proton gradient. This chain is NADH-quinone oxidoreductase subunit I, found in Wolbachia pipientis wMel.